The following is a 225-amino-acid chain: Transmembrane protein 40 (225 aa).

Met-1 bears the N-acetylmethionine mark. Residues 1–14 show a composition bias toward low complexity; sequence MEASGSSSQSQDSG. Residues 1-96 form a disordered region; that stretch reads MEASGSSSQS…RRDSLRGADH (96 aa). Positions 15 to 29 are enriched in basic and acidic residues; it reads GVHRETEDHYQETEL. Residues 30–39 are compositionally biased toward basic residues; sequence HKHHGKARER. Residues 46 to 68 are compositionally biased toward low complexity; it reads SSSSSSSSSSSSSSSSSSSSSSD. Residues 78 to 87 are compositionally biased toward basic residues; that stretch reads GPRKHRRRPR. At Ser-129 the chain carries Phosphoserine. Transmembrane regions (helical) follow at residues 152 to 172 and 179 to 199; these read FFHF…YHYY and LGVG…FGLV.

It localises to the membrane. The chain is Transmembrane protein 40 (Tmem40) from Mus musculus (Mouse).